The sequence spans 128 residues: Sulfurtransferase TusD (128 aa).

Catalysis depends on C78, which acts as the Cysteine persulfide intermediate.

It belongs to the DsrE/TusD family. In terms of assembly, heterohexamer, formed by a dimer of trimers. The hexameric TusBCD complex contains 2 copies each of TusB, TusC and TusD. The TusBCD complex interacts with TusE.

It localises to the cytoplasm. Functionally, part of a sulfur-relay system required for 2-thiolation of 5-methylaminomethyl-2-thiouridine (mnm(5)s(2)U) at tRNA wobble positions. Accepts sulfur from TusA and transfers it in turn to TusE. The protein is Sulfurtransferase TusD of Cronobacter sakazakii (strain ATCC BAA-894) (Enterobacter sakazakii).